Consider the following 261-residue polypeptide: tRNA pseudouridine synthase A (261 aa).

Aspartate 51 (nucleophile) is an active-site residue. Tyrosine 109 is a binding site for substrate.

The protein belongs to the tRNA pseudouridine synthase TruA family. As to quaternary structure, homodimer.

It carries out the reaction uridine(38/39/40) in tRNA = pseudouridine(38/39/40) in tRNA. Formation of pseudouridine at positions 38, 39 and 40 in the anticodon stem and loop of transfer RNAs. The chain is tRNA pseudouridine synthase A from Shewanella amazonensis (strain ATCC BAA-1098 / SB2B).